Consider the following 365-residue polypeptide: MMQRVVLHIDMDYFFAAIEERENPELREKAVVVCMLSGRSELSGSVSTCNYVAREFGIRSGMPCSRAKKLNPEAVFLPVRKDFYTSVSDRIMEILRSYADPGNGDSFEQISVDEAFLESSERTGGDFRLAFEVGMQIKKEIKEKENLTCSIGIGPNKLISKMASSAKKPDGITVVSPQDLEAFLWPLNVSKLWGIGSVTAGKLQEMGIVTVKDLAERDVIELISIFGKSRGTWLKQAASGIDDSPLKERDGSEQIGRIATLPEDSLDKKLISSLIERLAGDVIEKLDSRELSFRIVTVTVINSNFRMYTKSRTLSHPVSSKEVLLQVSGEILDEFLSENRTEFRRVGVRVGGLQKKKGQKSLFDY.

Residues 6–196 (VLHIDMDYFF…LNVSKLWGIG (191 aa)) enclose the UmuC domain. Positions 10 and 113 each coordinate Mg(2+). E114 is a catalytic residue.

Belongs to the DNA polymerase type-Y family. As to quaternary structure, monomer. It depends on Mg(2+) as a cofactor.

The protein resides in the cytoplasm. The catalysed reaction is DNA(n) + a 2'-deoxyribonucleoside 5'-triphosphate = DNA(n+1) + diphosphate. Poorly processive, error-prone DNA polymerase involved in untargeted mutagenesis. Copies undamaged DNA at stalled replication forks, which arise in vivo from mismatched or misaligned primer ends. These misaligned primers can be extended by PolIV. Exhibits no 3'-5' exonuclease (proofreading) activity. May be involved in translesional synthesis. In Methanosarcina mazei (strain ATCC BAA-159 / DSM 3647 / Goe1 / Go1 / JCM 11833 / OCM 88) (Methanosarcina frisia), this protein is DNA polymerase IV 1 (dbh1).